Consider the following 674-residue polypeptide: Amino-acid acetyltransferase, mitochondrial (674 aa).

Residues 1–50 (MPLVAAMLTRSNGAWKKATSVVQASICRDQQRPNHTTITSVTSVSQRRHF) constitute a mitochondrion transit peptide. The segment covering 33 to 45 (PNHTTITSVTSVS) has biased composition (polar residues). The tract at residues 33–74 (PNHTTITSVTSVSQRRHFSSAENGAKPSRSHPSAAEAKQKRE) is disordered. The N-acetyltransferase domain maps to 497–665 (GTPRLKLTDT…YEDVCRGVVP (169 aa)).

Belongs to the acetyltransferase family.

The protein localises to the mitochondrion. The catalysed reaction is L-glutamate + acetyl-CoA = N-acetyl-L-glutamate + CoA + H(+). Its pathway is amino-acid biosynthesis; L-arginine biosynthesis; N(2)-acetyl-L-ornithine from L-glutamate: step 1/4. Its function is as follows. N-acetylglutamate synthase involved in arginine biosynthesis. The polypeptide is Amino-acid acetyltransferase, mitochondrial (ARG2) (Podospora anserina (strain S / ATCC MYA-4624 / DSM 980 / FGSC 10383) (Pleurage anserina)).